Here is a 38-residue protein sequence, read N- to C-terminus: Augerpeptide hhe53 (38 aa).

Post-translationally, contains 2 disulfide bonds. As to expression, expressed by the venom duct.

It is found in the secreted. This Hastula hectica (Sea snail) protein is Augerpeptide hhe53.